Reading from the N-terminus, the 338-residue chain is Ketol-acid reductoisomerase (NADP(+)) (338 aa).

The KARI N-terminal Rossmann domain occupies 1–181 (MKVYYDKDAD…GGTRGGVIET (181 aa)). NADP(+)-binding positions include 24–27 (YGSQ), arginine 47, and serine 52. Residue histidine 107 is part of the active site. Glycine 133 is an NADP(+) binding site. One can recognise a KARI C-terminal knotted domain in the interval 182-327 (TFKEETETDL…AKLRDMMPWI (146 aa)). 4 residues coordinate Mg(2+): aspartate 190, glutamate 194, glutamate 226, and glutamate 230. Serine 251 is a binding site for substrate.

This sequence belongs to the ketol-acid reductoisomerase family. It depends on Mg(2+) as a cofactor.

It carries out the reaction (2R)-2,3-dihydroxy-3-methylbutanoate + NADP(+) = (2S)-2-acetolactate + NADPH + H(+). It catalyses the reaction (2R,3R)-2,3-dihydroxy-3-methylpentanoate + NADP(+) = (S)-2-ethyl-2-hydroxy-3-oxobutanoate + NADPH + H(+). It participates in amino-acid biosynthesis; L-isoleucine biosynthesis; L-isoleucine from 2-oxobutanoate: step 2/4. The protein operates within amino-acid biosynthesis; L-valine biosynthesis; L-valine from pyruvate: step 2/4. Involved in the biosynthesis of branched-chain amino acids (BCAA). Catalyzes an alkyl-migration followed by a ketol-acid reduction of (S)-2-acetolactate (S2AL) to yield (R)-2,3-dihydroxy-isovalerate. In the isomerase reaction, S2AL is rearranged via a Mg-dependent methyl migration to produce 3-hydroxy-3-methyl-2-ketobutyrate (HMKB). In the reductase reaction, this 2-ketoacid undergoes a metal-dependent reduction by NADPH to yield (R)-2,3-dihydroxy-isovalerate. This is Ketol-acid reductoisomerase (NADP(+)) from Nitrosomonas europaea (strain ATCC 19718 / CIP 103999 / KCTC 2705 / NBRC 14298).